A 549-amino-acid chain; its full sequence is Glucose-6-phosphate isomerase (549 aa).

E355 (proton donor) is an active-site residue. Active-site residues include H386 and K514.

Belongs to the GPI family.

The protein resides in the cytoplasm. It catalyses the reaction alpha-D-glucose 6-phosphate = beta-D-fructose 6-phosphate. It functions in the pathway carbohydrate biosynthesis; gluconeogenesis. It participates in carbohydrate degradation; glycolysis; D-glyceraldehyde 3-phosphate and glycerone phosphate from D-glucose: step 2/4. Its function is as follows. Catalyzes the reversible isomerization of glucose-6-phosphate to fructose-6-phosphate. This Aeromonas salmonicida (strain A449) protein is Glucose-6-phosphate isomerase.